The sequence spans 249 residues: Vesicle-associated membrane protein-associated protein A (249 aa).

Ala2 bears the N-acetylalanine mark. The Cytoplasmic portion of the chain corresponds to 2 to 227 (ASASGAMAKH…VSFRDNVTSP (226 aa)). In terms of domain architecture, MSP spans 14–131 (ILVLDPPSDL…MDSKLRCVFE (118 aa)). A phosphorylated FFAT motif binding region spans residues 50–53 (KVKT). Lys125 is subject to N6-acetyllysine. Positions 135–144 (ENDKLNDMEP) are enriched in basic and acidic residues. The disordered stretch occupies residues 135–166 (ENDKLNDMEPSKAVPLNASKQDGPLPKPHSVS). Ser166 carries the post-translational modification Phosphoserine. Residues 168–207 (NDTETRKLMEECKRLQGEMMKLSEENRHLRDEGLRLRKVA) adopt a coiled-coil conformation. Thr170 is subject to Phosphothreonine. Ser214, Ser216, and Ser219 each carry phosphoserine. A helical; Anchor for type IV membrane protein membrane pass occupies residues 228–248 (LPSLLVVIAAIFIGFFLGKFI).

This sequence belongs to the VAMP-associated protein (VAP) (TC 9.B.17) family. In terms of assembly, homodimer; disulfide-linked. Heterodimer with VAPB. Interacts with VAMP1, VAMP2, STX1A, BET1, SEC22C and with the C-terminal domain of OCLN. Interacts (via MSP domain) with OSBPL1A (via FFAT motif). Interacts (via MSP domain) with ZFYVE27; may retain ZFYVE27 in the endoplasmic reticulum and regulate its function in cell projections formation. Interacts with OSBP. Interacts (via C-terminus) with RSAD2/viperin (via C-terminus). Interacts with IFITM3. Interacts with OSBPL3 (phosphorylated form). Interacts with KIF5A in a ZFYVE27-dependent manner. Interacts (via MSP domain) with STARD3 (via phosphorylated FFAT motif); this interaction recruits VAPA to the endosome. Interacts with STARD3NL (via FFAT motif). Interacts with CERT1. Interacts with PLEKHA3 and SACM1L to form a ternary complex. Interacts with VPS13A (via FFAT motif). Interacts with RB1CC1 (via phosphorylated FFAT motif), MIGA2 (via phosphorylated FFAT motif), RMDN3 (via phosphorylated FFAT motif), KCNB1 (via phosphorylated FFAT motif) and KCNB2 (via phosphorylated FFAT motif). Interacts (via MSP domain) with WDR44; the interactions connect the endoplasmic reticulum (ER) with the endosomal tubule. As to expression, ubiquitous.

The protein resides in the endoplasmic reticulum membrane. It is found in the cell membrane. It localises to the cell junction. Its subcellular location is the tight junction. The protein localises to the nucleus membrane. Endoplasmic reticulum (ER)-anchored protein that mediates the formation of contact sites between the ER and endosomes via interaction with FFAT motif-containing proteins such as STARD3 or WDR44. STARD3-VAPA interaction enables cholesterol transfer from the ER to endosomes. Via interaction with WDR44 participates in neosynthesized protein export. In addition, recruited to the plasma membrane through OSBPL3 binding. The OSBPL3-VAPA complex stimulates RRAS signaling which in turn attenuates integrin beta-1 (ITGB1) activation at the cell surface. With OSBPL3, may regulate ER morphology. May play a role in vesicle trafficking. The polypeptide is Vesicle-associated membrane protein-associated protein A (Rattus norvegicus (Rat)).